Consider the following 372-residue polypeptide: Cytochrome b (372 aa).

4 consecutive transmembrane segments (helical) span residues 25–45, 69–90, 105–125, and 170–190; these read FGSM…FLAI, WIMQ…YIHI, WLSG…GYVL, and FFAL…IHII. Residues His75 and His89 each contribute to the heme b site. His174 and His188 together coordinate heme b. Position 193 (His193) interacts with a ubiquinone. 4 helical membrane-spanning segments follow: residues 218–238, 280–300, 312–332, and 339–358; these read YKDM…LSFS, LGGT…PFTH, LTQT…WTAT, and FISI…IINP.

Belongs to the cytochrome b family. The cytochrome bc1 complex contains 3 respiratory subunits (MT-CYB, CYC1 and UQCRFS1), 2 core proteins (UQCRC1 and UQCRC2) and probably 6 low-molecular weight proteins. The cofactor is heme b.

The protein resides in the mitochondrion inner membrane. In terms of biological role, component of the ubiquinol-cytochrome c reductase complex (complex III or cytochrome b-c1 complex) that is part of the mitochondrial respiratory chain. The b-c1 complex mediates electron transfer from ubiquinol to cytochrome c. Contributes to the generation of a proton gradient across the mitochondrial membrane that is then used for ATP synthesis. This is Cytochrome b (MT-CYB) from Dendroaspis polylepis polylepis (Black mamba).